A 354-amino-acid polypeptide reads, in one-letter code: UDP-3-O-acylglucosamine N-acyltransferase (354 aa).

The Proton acceptor role is filled by histidine 258.

It belongs to the transferase hexapeptide repeat family. LpxD subfamily. In terms of assembly, homotrimer.

The catalysed reaction is a UDP-3-O-[(3R)-3-hydroxyacyl]-alpha-D-glucosamine + a (3R)-hydroxyacyl-[ACP] = a UDP-2-N,3-O-bis[(3R)-3-hydroxyacyl]-alpha-D-glucosamine + holo-[ACP] + H(+). The protein operates within bacterial outer membrane biogenesis; LPS lipid A biosynthesis. Functionally, catalyzes the N-acylation of UDP-3-O-acylglucosamine using 3-hydroxyacyl-ACP as the acyl donor. Is involved in the biosynthesis of lipid A, a phosphorylated glycolipid that anchors the lipopolysaccharide to the outer membrane of the cell. This chain is UDP-3-O-acylglucosamine N-acyltransferase, found in Rhizobium meliloti (strain 1021) (Ensifer meliloti).